We begin with the raw amino-acid sequence, 271 residues long: Glutamate racemase (271 aa).

Residues D12–S13 and Y44–G45 each bind substrate. The active-site Proton donor/acceptor is C75. N76–T77 is a binding site for substrate. The Proton donor/acceptor role is filled by C185. Residue T186–H187 participates in substrate binding.

This sequence belongs to the aspartate/glutamate racemases family.

It catalyses the reaction L-glutamate = D-glutamate. Its pathway is cell wall biogenesis; peptidoglycan biosynthesis. Provides the (R)-glutamate required for cell wall biosynthesis. The polypeptide is Glutamate racemase (Methylococcus capsulatus (strain ATCC 33009 / NCIMB 11132 / Bath)).